The chain runs to 530 residues: Calcium-dependent protein kinase 14 (530 aa).

Glycine 2 carries the N-myristoyl glycine lipid modification. Positions 54–312 (YKLGRELGRG…AQQVLDHPWI (259 aa)) constitute a Protein kinase domain. ATP contacts are provided by residues 60–68 (LGRGEFGVT) and lysine 83. The active-site Proton acceptor is the aspartate 178. The residue at position 218 (serine 218) is a Phosphoserine. The autoinhibitory domain stretch occupies residues 318 to 348 (ASNVSLGETVRARLKQFSVMNKLKKRALRVI). EF-hand domains lie at 355 to 390 (EETSCIKERFQVMDTSNRGKITITELGIGLQKLGIV), 391 to 426 (VPQDDIQILMDAGDVDKDGYLDVNEFVAISVHIRKL), 427 to 462 (GNDEHLKKAFTFFDKNKSGYIEIEELRDALADDVDT), and 463 to 498 (TSEEVVEAIILDVDTNKDGKISYDEFATMMKTGTDW). 18 residues coordinate Ca(2+): aspartate 368, serine 370, lysine 374, glutamate 379, aspartate 404, aspartate 406, aspartate 408, tyrosine 410, glutamate 415, aspartate 440, asparagine 442, serine 444, tyrosine 446, glutamate 451, aspartate 476, asparagine 478, aspartate 480, and lysine 482. Serine 484 carries the phosphoserine modification. Position 487 (glutamate 487) interacts with Ca(2+).

This sequence belongs to the protein kinase superfamily. Ser/Thr protein kinase family. CDPK subfamily.

The protein resides in the membrane. The catalysed reaction is L-seryl-[protein] + ATP = O-phospho-L-seryl-[protein] + ADP + H(+). It catalyses the reaction L-threonyl-[protein] + ATP = O-phospho-L-threonyl-[protein] + ADP + H(+). Its activity is regulated as follows. Activated by calcium. Autophosphorylation may play an important role in the regulation of the kinase activity. Its function is as follows. May play a role in signal transduction pathways that involve calcium as a second messenger. This Arabidopsis thaliana (Mouse-ear cress) protein is Calcium-dependent protein kinase 14 (CPK14).